The following is a 399-amino-acid chain: Nicotinate phosphoribosyltransferase (399 aa).

Phosphohistidine; by autocatalysis is present on His217.

Belongs to the NAPRTase family. Post-translationally, transiently phosphorylated on a His residue during the reaction cycle. Phosphorylation strongly increases the affinity for substrates and increases the rate of nicotinate D-ribonucleotide production. Dephosphorylation regenerates the low-affinity form of the enzyme, leading to product release.

The catalysed reaction is nicotinate + 5-phospho-alpha-D-ribose 1-diphosphate + ATP + H2O = nicotinate beta-D-ribonucleotide + ADP + phosphate + diphosphate. The protein operates within cofactor biosynthesis; NAD(+) biosynthesis; nicotinate D-ribonucleotide from nicotinate: step 1/1. Functionally, catalyzes the synthesis of beta-nicotinate D-ribonucleotide from nicotinate and 5-phospho-D-ribose 1-phosphate at the expense of ATP. The chain is Nicotinate phosphoribosyltransferase from Burkholderia orbicola (strain MC0-3).